A 1334-amino-acid polypeptide reads, in one-letter code: Adenylate cyclase type 9 (1334 aa).

Disordered stretches follow at residues 1–28 and 49–71; these read MASPPHQQLLHHHSTEVSCDSSGDSNSV and ISSSCSSGESGGVGRGGGGGLRR. The Cytoplasmic segment spans residues 1 to 113; it reads MASPPHQQLL…CFPQTQRRFR (113 aa). Positions 16–28 are enriched in polar residues; it reads EVSCDSSGDSNSV. Gly residues predominate over residues 57–69; sequence ESGGVGRGGGGGL. The helical transmembrane segment at 114–134 threads the bilayer; it reads YALFYIGSACLLWGIYFGVHM. Topologically, residues 135-137 are extracellular; the sequence is REK. The helical transmembrane segment at 138 to 158 threads the bilayer; sequence QMVFMVPALCFLLVCVAFFAF. At 159-167 the chain is on the cytoplasmic side; sequence TFTKAYARR. A helical transmembrane segment spans residues 168–187; it reads YVWTSGYTLLVFALTLAPQF. Topologically, residues 188–207 are extracellular; that stretch reads QPWTLGERQRVQPRPAAPVD. A helical membrane pass occupies residues 208–227; the sequence is TCLSQVGSFSMCVEVLLLLY. The Cytoplasmic portion of the chain corresponds to 228-233; it reads TVMHLP. A helical transmembrane segment spans residues 234–250; sequence LYLSLFLGLSYSVLFET. Topologically, residues 251–269 are extracellular; that stretch reads SAFRDESCTLLGGGAVYWE. A helical transmembrane segment spans residues 270-290; the sequence is LLSKAFLHVCIHAIGIHLFIM. Over 291 to 768 the chain is Cytoplasmic; the sequence is SEVRSRSTFL…VKTFASATFS (478 aa). The disordered stretch occupies residues 338–363; the sequence is QGDDESENSVKRHSTSSPKNRKKKPS. Residues 348 to 363 show a composition bias toward basic residues; sequence KRHSTSSPKNRKKKPS. Residues Asp388, Ile389, and Asp432 each contribute to the Mg(2+) site. Residues 388–393, 430–432, and Arg476 contribute to the ATP site; these read DIVGFT and LGD. Residues 635–670 form a disordered region; sequence GCQDEHKNSTKAPGGHSPKTQNGLLSPPQEEKLSNS. The chain crosses the membrane as a helical span at residues 769 to 789; sequence SLLDVFLSTTVFLILSVTCFL. Topologically, residues 790-800 are extracellular; the sequence is KHGMVASPPPP. A helical membrane pass occupies residues 801–821; sequence AAVVVFVIAILLEVLSLVISV. Residues 822–849 are Cytoplasmic-facing; the sequence is RMVFFLEEVMACTKRLLELISGWLPRHF. A helical transmembrane segment spans residues 850–870; sequence LGAILVSLPALAVFSHFTSDF. The Extracellular portion of the chain corresponds to 871–873; the sequence is ETN. The helical transmembrane segment at 874–894 threads the bilayer; it reads IHYTMFMCCAILIAIVQYCNF. Topologically, residues 895 to 902 are cytoplasmic; that stretch reads CQLSSWMR. A helical membrane pass occupies residues 903–923; sequence SLLATVVGAVLLILLYVSLCP. At 924–957 the chain is on the extracellular side; it reads DSSVETLHLDLAQNLSSRKSPCNSSMPADVKRPA. Residues Asn937 and Asn946 are each glycosylated (N-linked (GlcNAc...) asparagine). Residues 958–978 traverse the membrane as a helical segment; it reads DLIGQEVILAVFLLLLLVWFL. Topologically, residues 979–1334 are cytoplasmic; sequence NRSFEVSYRL…LTKLNVSKSV (356 aa). Residues Lys1090, 1167–1169, 1174–1178, and Lys1214 contribute to the ATP site; these read DIW and NIASR. Positions 1266–1303 are disordered; sequence SVQNSDKTAHATDNSETKDALPSSKKLQKEPTKAEERC. Composition is skewed to basic and acidic residues over residues 1272 to 1284 and 1292 to 1303; these read KTAHATDNSETKD and LQKEPTKAEERC.

The protein belongs to the adenylyl cyclase class-4/guanylyl cyclase family. Requires Mg(2+) as cofactor. The cofactor is Mn(2+). In terms of tissue distribution, detected in embryonic heart (at protein level).

The protein resides in the cell membrane. It is found in the membrane. It catalyses the reaction ATP = 3',5'-cyclic AMP + diphosphate. Insensitive to calcium/calmodulin, forskolin and somatostatin. Stimulated by beta-adrenergic receptor activation. Activity is down-regulated by calcium/calcineurin. In terms of biological role, adenylyl cyclase that catalyzes the formation of the signaling molecule cAMP in response to activation of G protein-coupled receptors. The chain is Adenylate cyclase type 9 (ADCY9) from Gallus gallus (Chicken).